The chain runs to 397 residues: DNA-directed RNA polymerase subunit Rpo1C (397 aa).

Belongs to the RNA polymerase beta' chain family. As to quaternary structure, part of the RNA polymerase complex. An artificial construct of the RNAP clamp domain (including part of this protein) contacts transcription elongation factors Spt4 and Spt5.

Its subcellular location is the cytoplasm. The enzyme catalyses RNA(n) + a ribonucleoside 5'-triphosphate = RNA(n+1) + diphosphate. Functionally, DNA-dependent RNA polymerase (RNAP) catalyzes the transcription of DNA into RNA using the four ribonucleoside triphosphates as substrates. Forms part of the jaw domain. The chain is DNA-directed RNA polymerase subunit Rpo1C from Pyrococcus furiosus (strain ATCC 43587 / DSM 3638 / JCM 8422 / Vc1).